Reading from the N-terminus, the 467-residue chain is tRNA(Ile)-lysidine synthase (467 aa).

26–31 (SGGPDS) serves as a coordination point for ATP.

Belongs to the tRNA(Ile)-lysidine synthase family.

The protein localises to the cytoplasm. The enzyme catalyses cytidine(34) in tRNA(Ile2) + L-lysine + ATP = lysidine(34) in tRNA(Ile2) + AMP + diphosphate + H(+). Ligates lysine onto the cytidine present at position 34 of the AUA codon-specific tRNA(Ile) that contains the anticodon CAU, in an ATP-dependent manner. Cytidine is converted to lysidine, thus changing the amino acid specificity of the tRNA from methionine to isoleucine. In Clostridium tetani (strain Massachusetts / E88), this protein is tRNA(Ile)-lysidine synthase.